We begin with the raw amino-acid sequence, 272 residues long: Acyl-[acyl-carrier-protein]--UDP-N-acetylglucosamine O-acyltransferase (272 aa).

This sequence belongs to the transferase hexapeptide repeat family. LpxA subfamily. In terms of assembly, homotrimer.

Its subcellular location is the cytoplasm. The enzyme catalyses a (3R)-hydroxyacyl-[ACP] + UDP-N-acetyl-alpha-D-glucosamine = a UDP-3-O-[(3R)-3-hydroxyacyl]-N-acetyl-alpha-D-glucosamine + holo-[ACP]. It participates in glycolipid biosynthesis; lipid IV(A) biosynthesis; lipid IV(A) from (3R)-3-hydroxytetradecanoyl-[acyl-carrier-protein] and UDP-N-acetyl-alpha-D-glucosamine: step 1/6. Functionally, involved in the biosynthesis of lipid A, a phosphorylated glycolipid that anchors the lipopolysaccharide to the outer membrane of the cell. This is Acyl-[acyl-carrier-protein]--UDP-N-acetylglucosamine O-acyltransferase from Rhizobium johnstonii (strain DSM 114642 / LMG 32736 / 3841) (Rhizobium leguminosarum bv. viciae).